Here is a 299-residue protein sequence, read N- to C-terminus: Bifunctional protein FolD (299 aa).

NADP(+) is bound by residues 168–170 (GRS), Ser193, and Ile234.

This sequence belongs to the tetrahydrofolate dehydrogenase/cyclohydrolase family. In terms of assembly, homodimer.

The catalysed reaction is (6R)-5,10-methylene-5,6,7,8-tetrahydrofolate + NADP(+) = (6R)-5,10-methenyltetrahydrofolate + NADPH. It carries out the reaction (6R)-5,10-methenyltetrahydrofolate + H2O = (6R)-10-formyltetrahydrofolate + H(+). It participates in one-carbon metabolism; tetrahydrofolate interconversion. Functionally, catalyzes the oxidation of 5,10-methylenetetrahydrofolate to 5,10-methenyltetrahydrofolate and then the hydrolysis of 5,10-methenyltetrahydrofolate to 10-formyltetrahydrofolate. The chain is Bifunctional protein FolD from Agrobacterium fabrum (strain C58 / ATCC 33970) (Agrobacterium tumefaciens (strain C58)).